The following is a 776-amino-acid chain: E3 ubiquitin-protein ligase UHRF1 (776 aa).

One can recognise a Ubiquitin-like domain in the interval 1 to 78 (MWIQVRTMDG…VQLLVRQAVA (78 aa)). The segment at 88–126 (AELSDSDSGCGSAQSESDKGSTHGESDVQSAGASGQTDT) is disordered. Residues 93–102 (SDSGCGSAQS) show a composition bias toward polar residues. The span at 103-113 (ESDKGSTHGES) shows a compositional bias: basic and acidic residues. Residues 114–126 (DVQSAGASGQTDT) show a composition bias toward polar residues. Tudor-like regions lie at residues 135–201 (GFYK…PRAR) and 208–277 (QLEP…IEEP). Residues 278-298 (GSAEGPGASSDSPLKKGSNGP) are disordered. The linker stretch occupies residues 290-299 (PLKKGSNGPE). The PHD-type zinc-finger motif lies at 297–364 (GPECKVCKDD…DWYCPDCRND (68 aa)). Histone H3R2me0 binding regions lie at residues 331–335 (CDECD) and 351–353 (PDD). The YDG domain maps to 417–580 (GPVPGVPVGT…FLVWRYLLKR (164 aa)). The required to promote base flipping stretch occupies residues 443–444 (HV). DNA contacts are provided by residues 461 to 462 (AG) and D467. 2 required for formation of a 5-methylcytosine-binding pocket regions span residues 464–467 (YEDD) and 476–479 (YTGS). Residues 617–660 (EKEKENKNEDDIEETPTKGKRKRKSQSMEEKSSPTKGTPKKMKV) are disordered. S649 is subject to Phosphoserine; by CDK2. The RING-type zinc-finger motif lies at 706 to 745 (CICCQEVVYQPITTECQHNVCRECLQRSFKAKVYTCPACR).

Post-translationally, phosphorylation at Ser-649 is required for gastrulation. Expressed in proliferating tissues. Highly expressed 24-48 hours after fertilization (hpf) in rapidly proliferating tissues, including the tectum, retina and brachial arches. Preferentially expressed in the liver bud and expression is maintained in the fully developed liver. Also expressed in the proximal gut. In adult, the highest expression is detected in testis.

The protein resides in the nucleus. It is found in the cytoplasm. The catalysed reaction is S-ubiquitinyl-[E2 ubiquitin-conjugating enzyme]-L-cysteine + [acceptor protein]-L-lysine = [E2 ubiquitin-conjugating enzyme]-L-cysteine + N(6)-ubiquitinyl-[acceptor protein]-L-lysine.. The protein operates within protein modification; protein ubiquitination. Its function is as follows. Multidomain protein that acts as a key epigenetic regulator by bridging DNA methylation and chromatin modification. Specifically recognizes and binds hemimethylated DNA at replication forks via its YDG domain and recruits dnmt1 methyltransferase to ensure faithful propagation of the DNA methylation patterns through DNA replication. In addition to its role in maintenance of DNA methylation, also plays a key role in chromatin modification: through its tudor-like regions and PHD-type zinc fingers, specifically recognizes and binds histone H3 trimethylated at 'Lys-9' (H3K9me3) and unmethylated at 'Arg-2' (H3R2me0), respectively, and recruits chromatin proteins. Enriched in pericentric heterochromatin where it recruits different chromatin modifiers required for this chromatin replication. Also localizes to euchromatic regions where it negatively regulates transcription possibly by impacting DNA methylation and histone modifications. Has E3 ubiquitin-protein ligase activity by mediating the ubiquitination of target proteins. However, it is still unclear how E3 ubiquitin-protein ligase activity is related to its role in chromatin in vivo. Required for pregastrula and lens development. This chain is E3 ubiquitin-protein ligase UHRF1 (uhrf1), found in Danio rerio (Zebrafish).